The following is a 508-amino-acid chain: Protection of telomeres protein tpz1 (508 aa).

The pot1-binding stretch occupies residues 2–223 (SNCLKHPWLE…ENTTHGIYLE (222 aa)). Disordered stretches follow at residues 159–178 (QEASLSQQEKPNDNTSNSRD), 235–269 (VSETPEVKQEDNDEDLDAYSWSSSTDSAGEIPSLP), and 282–358 (PPPF…QSHR). The span at 327 to 347 (STEQLNSSLTIERSQSIQSTD) shows a compositional bias: polar residues. The segment covering 348–358 (SKQRVETQSHR) has biased composition (basic and acidic residues). The ccq1/poz1-binding stretch occupies residues 379–508 (TIDDSTGKLL…KKIEEFRNKS (130 aa)).

Interacts with ccq1, pot1 and poz1.

It is found in the chromosome. It localises to the telomere. Its subcellular location is the nucleus. Telomeric DNA-binding protein that is required to protect the 3'-end telomeric overhang and involved in telomere length regulation. recruits poz1 and ccq1 to telomeres, regulating telomere length negatively and positively respectively. The polypeptide is Protection of telomeres protein tpz1 (tpz1) (Schizosaccharomyces pombe (strain 972 / ATCC 24843) (Fission yeast)).